The following is a 370-amino-acid chain: Ig heavy chain C region (370 aa).

Ig-like domains lie at 40–134 (PTVI…RNIT), 145–237 (PAIK…DSIH), and 247–347 (PSVS…RTVN). Residues Asn-98, Asn-132, Asn-177, Asn-343, Asn-347, and Asn-357 are each glycosylated (N-linked (GlcNAc...) asparagine).

The chain is Ig heavy chain C region from Heterodontus francisci (Horn shark).